The chain runs to 365 residues: Ribosomal RNA large subunit methyltransferase F (365 aa).

Residues 1–50 (MSKPAVKSVPSATAKTATRAVNIRQKVKAPKQAKPEAKGRAKPSKDKPRA) form a disordered region. Residues 33 to 50 (AKPEAKGRAKPSKDKPRA) show a composition bias toward basic and acidic residues.

The protein belongs to the methyltransferase superfamily. METTL16/RlmF family.

The protein resides in the cytoplasm. It carries out the reaction adenosine(1618) in 23S rRNA + S-adenosyl-L-methionine = N(6)-methyladenosine(1618) in 23S rRNA + S-adenosyl-L-homocysteine + H(+). Specifically methylates the adenine in position 1618 of 23S rRNA. The sequence is that of Ribosomal RNA large subunit methyltransferase F from Shewanella baltica (strain OS155 / ATCC BAA-1091).